A 363-amino-acid polypeptide reads, in one-letter code: Aminomethyltransferase (363 aa).

This sequence belongs to the GcvT family. In terms of assembly, the glycine cleavage system is composed of four proteins: P, T, L and H.

The catalysed reaction is N(6)-[(R)-S(8)-aminomethyldihydrolipoyl]-L-lysyl-[protein] + (6S)-5,6,7,8-tetrahydrofolate = N(6)-[(R)-dihydrolipoyl]-L-lysyl-[protein] + (6R)-5,10-methylene-5,6,7,8-tetrahydrofolate + NH4(+). Functionally, the glycine cleavage system catalyzes the degradation of glycine. This chain is Aminomethyltransferase, found in Staphylococcus aureus (strain MRSA252).